We begin with the raw amino-acid sequence, 556 residues long: Formate--tetrahydrofolate ligase (556 aa).

An ATP-binding site is contributed by 65 to 72 (TPAGEGKS).

The protein belongs to the formate--tetrahydrofolate ligase family.

The enzyme catalyses (6S)-5,6,7,8-tetrahydrofolate + formate + ATP = (6R)-10-formyltetrahydrofolate + ADP + phosphate. The protein operates within one-carbon metabolism; tetrahydrofolate interconversion. The protein is Formate--tetrahydrofolate ligase of Clostridium perfringens (strain ATCC 13124 / DSM 756 / JCM 1290 / NCIMB 6125 / NCTC 8237 / Type A).